A 314-amino-acid chain; its full sequence is Acetyl-coenzyme A carboxylase carboxyl transferase subunit alpha (314 aa).

One can recognise a CoA carboxyltransferase C-terminal domain in the interval 32-289; that stretch reads EIDMLEASLE…KSAFVEQLDS (258 aa).

This sequence belongs to the AccA family. As to quaternary structure, acetyl-CoA carboxylase is a heterohexamer composed of biotin carboxyl carrier protein (AccB), biotin carboxylase (AccC) and two subunits each of ACCase subunit alpha (AccA) and ACCase subunit beta (AccD).

It is found in the cytoplasm. The catalysed reaction is N(6)-carboxybiotinyl-L-lysyl-[protein] + acetyl-CoA = N(6)-biotinyl-L-lysyl-[protein] + malonyl-CoA. It functions in the pathway lipid metabolism; malonyl-CoA biosynthesis; malonyl-CoA from acetyl-CoA: step 1/1. Functionally, component of the acetyl coenzyme A carboxylase (ACC) complex. First, biotin carboxylase catalyzes the carboxylation of biotin on its carrier protein (BCCP) and then the CO(2) group is transferred by the carboxyltransferase to acetyl-CoA to form malonyl-CoA. The protein is Acetyl-coenzyme A carboxylase carboxyl transferase subunit alpha of Staphylococcus aureus (strain bovine RF122 / ET3-1).